A 35-amino-acid chain; its full sequence is Dermonecrotic toxin LrSicTox-alphaI-1 (35 aa).

Residue histidine 11 is part of the active site. Aspartate 33 provides a ligand contact to Mg(2+).

Belongs to the arthropod phospholipase D family. Class II subfamily. It depends on Mg(2+) as a cofactor. In terms of processing, contains 2 disulfide bonds. Expressed by the venom gland.

It is found in the secreted. It carries out the reaction an N-(acyl)-sphingosylphosphocholine = an N-(acyl)-sphingosyl-1,3-cyclic phosphate + choline. The enzyme catalyses an N-(acyl)-sphingosylphosphoethanolamine = an N-(acyl)-sphingosyl-1,3-cyclic phosphate + ethanolamine. The catalysed reaction is a 1-acyl-sn-glycero-3-phosphocholine = a 1-acyl-sn-glycero-2,3-cyclic phosphate + choline. It catalyses the reaction a 1-acyl-sn-glycero-3-phosphoethanolamine = a 1-acyl-sn-glycero-2,3-cyclic phosphate + ethanolamine. Functionally, dermonecrotic toxins cleave the phosphodiester linkage between the phosphate and headgroup of certain phospholipids (sphingolipid and lysolipid substrates), forming an alcohol (often choline) and a cyclic phosphate. This toxin acts on sphingomyelin (SM). It may also act on ceramide phosphoethanolamine (CPE), lysophosphatidylcholine (LPC) and lysophosphatidylethanolamine (LPE), but not on lysophosphatidylserine (LPS), and lysophosphatidylglycerol (LPG). It acts by transphosphatidylation, releasing exclusively cyclic phosphate products as second products. Induces dermonecrosis, hemolysis, increased vascular permeability, edema, inflammatory response, and platelet aggregation. The protein is Dermonecrotic toxin LrSicTox-alphaI-1 of Loxosceles reclusa (Brown recluse spider).